Here is a 570-residue protein sequence, read N- to C-terminus: Ribosome-inactivating protein SNAI (570 aa).

Positions 1-28 (MRLVAKLLYLAVLAICGLGIHGALTHPR) are cleaved as a signal peptide. Asn-40, Asn-62, and Asn-144 each carry an N-linked (GlcNAc...) asparagine glycan. Glu-199 is a catalytic residue. The N-linked (GlcNAc...) asparagine glycan is linked to Asn-260. Intrachain disulfides connect Cys-284–Cys-316, Cys-332–Cys-351, and Cys-373–Cys-385. Ricin B-type lectin domains lie at 319-439 (VEVT…WTVG) and 441-566 (VEPL…WITT). The 1-alpha repeat unit spans residues 329 to 369 (DGLCVDVRYGHYIDGNPVQLRPCGNECNQLWTFRTDGTIRW). One copy of the 1-beta repeat lies at 370-405 (LGKCLTASSSVMIYDCNTVPPEATKWVVSIDGTITN). A 1-gamma repeat occupies 408 to 440 (SGLVLTAPQAAEGTALSLENNIHAARQGWTVGD). A 2-alpha repeat occupies 452–489 (KQMCLRENGENNFVWLEDCVLNRVQQEWALYGDGTIRV). Cys-455 and Cys-470 form a disulfide bridge. Asn-492 is a glycosylation site (N-linked (GlcNAc...) asparagine). Residues 493 to 531 (RSLCVTSEDHEPSDLIVILKCEGSGNQRWVFNTNGTISN) form a 2-beta repeat. Cys-496 and Cys-513 are joined by a disulfide. Asn-526 is a glycosylation site (N-linked (GlcNAc...) asparagine). One copy of the 2-gamma repeat lies at 534-567 (AKLLMDVAQRDVSLRKIILYRPTGNPNQQWITTT).

This sequence belongs to the ribosome-inactivating protein family. Type 2 RIP subfamily. In terms of assembly, tetramer of four pairs of disulfide bound A-B chains. Post-translationally, the precursor is processed in two chains, A and B, that are linked by a disulfide bond. A small truncated form corresponding roughly to the second ricin B-type lectin domain of the B chain, TrSNAI, can also be produced. Glycosylated. N-glycans of subunit A are (Man)2-3(Xyl)(GlcNAc)2(Fuc) at Asn-40, (GlcNAc)0-2(Man)3(Xyl)(GlcNAc)2(Fuc) or (Man)1-2(GlcNAc)2 at Asn-62, (Man)3(Xyl)(GlcNAc)2(Fuc)0-1 at Asn-144 and (GlcNAc)0-1(Man)3(Xyl)(GlcNAc)2(Fuc) at Asn-260. N-glycans of subunit B are (Man)3(Xyl)(GlcNAc)2(Fuc) at Asn-492 and (Man)6-9(GlcNAc)2 at Asn-526. In terms of tissue distribution, expressed in bark.

It carries out the reaction Endohydrolysis of the N-glycosidic bond at one specific adenosine on the 28S rRNA.. In terms of biological role, neu5Ac(alpha2-6)Gal/GalNAc specific agglutinin. Behaves as a type-2 ribosome-inactivating protein. Strongly inhibits mammalian but not plant ribosomes. The A chain is responsible for inhibiting protein synthesis through the catalytic inactivation of 60S ribosomal subunits by removing adenine from position 4,324 of 28S rRNA. The B chain binds to cell receptors and probably facilitates the entry into the cell of the A chain; B chains are also responsible for cell agglutination (lectin activity). Involved in plant defense against insects. Functionally, binds Neu5Ac(alpha2-6)Gal/GalNAc but has no clear agglutination activity. This is Ribosome-inactivating protein SNAI from Sambucus nigra (European elder).